Consider the following 70-residue polypeptide: Protein SlyX homolog (70 aa).

It belongs to the SlyX family.

The polypeptide is Protein SlyX homolog (Shewanella piezotolerans (strain WP3 / JCM 13877)).